Reading from the N-terminus, the 431-residue chain is 3-deoxy-D-manno-octulosonic acid transferase (431 aa).

The chain crosses the membrane as a helical; Signal-anchor span at residues 5–27; that stretch reads WLTSRLYDAFLVCAFFVSAPRIF. Glu-67 acts as the Proton acceptor in catalysis. Residues 275-276, 315-317, and 342-345 contribute to the CMP site; these read PR, MGV, and NLLE.

This sequence belongs to the glycosyltransferase group 1 family. Glycosyltransferase 30 subfamily.

It is found in the cell inner membrane. The enzyme catalyses lipid IVA (E. coli) + CMP-3-deoxy-beta-D-manno-octulosonate = alpha-Kdo-(2-&gt;6)-lipid IVA (E. coli) + CMP + H(+). It catalyses the reaction alpha-Kdo-(2-&gt;6)-lipid IVA (E. coli) + CMP-3-deoxy-beta-D-manno-octulosonate = alpha-Kdo-(2-&gt;4)-alpha-Kdo-(2-&gt;6)-lipid IVA (E. coli) + CMP + H(+). It carries out the reaction alpha-Kdo-(2-&gt;4)-alpha-Kdo-(2-&gt;6)-lipid IVA (E. coli) + CMP-3-deoxy-beta-D-manno-octulosonate = alpha-Kdo-(2-&gt;8)-alpha-Kdo-(2-&gt;4)-alpha-Kdo-(2-&gt;6)-lipid IVA (E. coli) + CMP + H(+). It participates in bacterial outer membrane biogenesis; LPS core biosynthesis. Involved in lipopolysaccharide (LPS) biosynthesis. Catalyzes the transfer of three 3-deoxy-D-manno-octulosonate (Kdo) residues from CMP-Kdo to lipid IV(A), the tetraacyldisaccharide-1,4'-bisphosphate precursor of lipid A. Thus generates the genus-specific LPS epitope of Chlamydia, composed of the trisaccharide alpha-Kdo-(2-&gt;8)-alpha-Kdo-(2-&gt;4)-alpha-Kdo. The chain is 3-deoxy-D-manno-octulosonic acid transferase (waaA) from Chlamydia trachomatis serovar A (strain ATCC VR-571B / DSM 19440 / HAR-13).